We begin with the raw amino-acid sequence, 132 residues long: ATP synthase epsilon chain (132 aa).

Belongs to the ATPase epsilon chain family. F-type ATPases have 2 components, CF(1) - the catalytic core - and CF(0) - the membrane proton channel. CF(1) has five subunits: alpha(3), beta(3), gamma(1), delta(1), epsilon(1). CF(0) has three main subunits: a, b and c.

It is found in the cell inner membrane. Produces ATP from ADP in the presence of a proton gradient across the membrane. The chain is ATP synthase epsilon chain from Gloeobacter violaceus (strain ATCC 29082 / PCC 7421).